Here is a 134-residue protein sequence, read N- to C-terminus: MDKEYLALLERAYTLVAPKAQRRTEIPKIQVENMPRKTIIPNFGAIAKRLNRDIYFMAKFFQKELAVPGTVEGDVFTLHGEKSPKVVEAVYERFIRYYVVCPVCNSIDTELRKEGRVFVMKCLACGASTPVKPL.

This sequence belongs to the eIF-2-beta/eIF-5 family. Heterotrimer composed of an alpha, a beta and a gamma chain.

In terms of biological role, eIF-2 functions in the early steps of protein synthesis by forming a ternary complex with GTP and initiator tRNA. This Pyrobaculum arsenaticum (strain DSM 13514 / JCM 11321 / PZ6) protein is Translation initiation factor 2 subunit beta.